Here is a 392-residue protein sequence, read N- to C-terminus: PMA1 stabilization in the Golgi protein 1 (392 aa).

An N-terminal signal peptide occupies residues 1–22; sequence MRFHDSILIFFSLASLYQHVHG. O-linked (Man) threonine glycans are attached at residues Thr-34 and Thr-35. O-linked (Man) serine glycosylation is present at Ser-36. The O-linked (Man) threonine glycan is linked to Thr-45. O-linked (Man) serine glycosylation occurs at Ser-49. 3 O-linked (Man) threonine glycosylation sites follow: Thr-55, Thr-57, and Thr-63. The O-linked (Man) serine glycan is linked to Ser-65. The O-linked (Man) threonine glycan is linked to Thr-71. O-linked (Man) serine glycosylation is present at Ser-80. Residues Thr-89 and Thr-99 are each glycosylated (O-linked (Man) threonine). The O-linked (Man) serine glycan is linked to Ser-107. Thr-108 and Thr-112 each carry an O-linked (Man) threonine glycan. 2 O-linked (Man) serine glycosylation sites follow: Ser-114 and Ser-115. Thr-117 carries O-linked (Man) threonine glycosylation. Ser-119 and Ser-148 each carry an O-linked (Man) serine glycan. O-linked (Man) threonine glycosylation is present at Thr-156. O-linked (Man) serine glycosylation is present at Ser-171. Residue Thr-176 is glycosylated (O-linked (Man) threonine). Ser-181 carries an O-linked (Man) serine glycan. 4 O-linked (Man) threonine glycosylation sites follow: Thr-188, Thr-192, Thr-195, and Thr-199. Residues Ser-203 and Ser-215 are each glycosylated (O-linked (Man) serine). Residues 230–317 are Lumenal-facing; it reads DIPATFFSSE…DAGITNDQWY (88 aa). A helical membrane pass occupies residues 318–338; that stretch reads YVALSIPTVVVVFFVFMYFFL. Residues 339–392 lie on the Cytoplasmic side of the membrane; the sequence is YVNGKNRDFTDVTRKALNKKRRVLGKFSEMKKFKNMKNHKYTELPSYKKTSKQN.

In terms of assembly, interacts with EXP1. PSG1-N' interacts with ERAD-related proteins involved in PMA1 quality control including EPS1, CDC48, UBX2 and SSM4. PSG1-C' interacts with the TLG1/2 SNARE complex proteins TLG1, TLG2 and VTI1. In terms of processing, the precursor protein is cleaved into two polypeptide chains, PSG1-N' and PSG1-C'. The cleavage is performed in the Golgi apparatus by Ca(+)-dependent serine protease KEX2 between Arg-229 and Asp-230. Post-translationally, PSG1-N' is highly O-mannosylated.

It localises to the golgi apparatus lumen. It is found in the cytoplasmic vesicle. The protein localises to the COPI-coated vesicle membrane. In terms of biological role, with EXP1, the specific cargo receptor protein for the plasma membrane ATPase PMA1, is involved in the transport and/or maturation of PMA1. EXP1 and PSG1 probably act sequentially to promote PMA1 sorting between the ER and the Golgi, with EXP1 promoting PMA1 export from the ER to the Golgi while PSG1 has a role in PMA1 maturation or quality control in the Golgi. PSG1 might also couple PMA1 sorting and maturation in the early secretory pathway with the glycosylation machinery. Its function is as follows. PSG1 is cleaved by KEX2 in two stable peptides, PSG1-N' and PSG1-C', the former supporting a role in maturation quality control, the latter having a role in modulating vesicular trafficking. The polypeptide is PMA1 stabilization in the Golgi protein 1 (Saccharomyces cerevisiae (strain ATCC 204508 / S288c) (Baker's yeast)).